Consider the following 299-residue polypeptide: Urease accessory protein UreD (299 aa).

The protein belongs to the UreD family. In terms of assembly, ureD, UreF and UreG form a complex that acts as a GTP-hydrolysis-dependent molecular chaperone, activating the urease apoprotein by helping to assemble the nickel containing metallocenter of UreC. The UreE protein probably delivers the nickel.

It localises to the cytoplasm. Its function is as follows. Required for maturation of urease via the functional incorporation of the urease nickel metallocenter. The chain is Urease accessory protein UreD from Prochlorococcus marinus (strain MIT 9303).